Consider the following 287-residue polypeptide: Bifunctional protein FolD (287 aa).

NADP(+) contacts are provided by residues 166–168 (GAS) and isoleucine 232.

This sequence belongs to the tetrahydrofolate dehydrogenase/cyclohydrolase family. As to quaternary structure, homodimer.

It catalyses the reaction (6R)-5,10-methylene-5,6,7,8-tetrahydrofolate + NADP(+) = (6R)-5,10-methenyltetrahydrofolate + NADPH. It carries out the reaction (6R)-5,10-methenyltetrahydrofolate + H2O = (6R)-10-formyltetrahydrofolate + H(+). Its pathway is one-carbon metabolism; tetrahydrofolate interconversion. Catalyzes the oxidation of 5,10-methylenetetrahydrofolate to 5,10-methenyltetrahydrofolate and then the hydrolysis of 5,10-methenyltetrahydrofolate to 10-formyltetrahydrofolate. This Aeromonas hydrophila subsp. hydrophila (strain ATCC 7966 / DSM 30187 / BCRC 13018 / CCUG 14551 / JCM 1027 / KCTC 2358 / NCIMB 9240 / NCTC 8049) protein is Bifunctional protein FolD.